We begin with the raw amino-acid sequence, 605 residues long: MGDPVIRTASPYTNPIIKCPRLQRLSSGPSSSFINNNNSNNNNNKSSNMFNHDHVNKTNLHPGGVKPHVEHTELEEELHQKAHIDYDRVAIIANPSVASLYEDALVYETGTAITSSGALTAYSGKKTGRSPSDKRIVKEPSSENDIWWGPVNKPMSPEVWKINRERAVDYLNTRNRIYVVDGYAGWDEKYRIRVRVVCARAYHALFMRNMLIRPPREELEHFHPDYTIYNAGSFPANRYTEGMSSSTSVAINFAEKEMVILGTEYAGEMKKGIFTVMFYEGPVKHNILTLHSSANEGKDGDVTLFFGLSGTGKTTLSADPNRRLIGDDEHCWSDRGVFNIEGGCYAKTIGLSAEKEPDIFNAIRYGSVLENVVFNPETREVDYGDATLTENTRCAYPIEYIPNAKIPCLSPNHPKNIILLTCDARGVLPPISKLDSAQTMFHFISGYTSKMAGTEDGILEPQATFSSCFAQPFLALHPMRYAKMLAEKIENHNANAWLLNTGWVGAGFAQGGKRCPLKYTRAILDAIHSGELANVEYENYEVFNLQVPKSCPGVPSELLNPKTAWTAGANSFDTEVKKLGGLFLENFKKYESEATEDVIKAGPVV.

The segment covering 27–48 (SGPSSSFINNNNSNNNNNKSSN) has biased composition (low complexity). Positions 27–67 (SGPSSSFINNNNSNNNNNKSSNMFNHDHVNKTNLHPGGVKP) are disordered. Position 307–314 (307–314 (GLSGTGKT)) interacts with ATP.

Belongs to the phosphoenolpyruvate carboxykinase (ATP) family.

It catalyses the reaction oxaloacetate + ATP = phosphoenolpyruvate + ADP + CO2. Its pathway is carbohydrate biosynthesis; gluconeogenesis. In Neurospora crassa (strain ATCC 24698 / 74-OR23-1A / CBS 708.71 / DSM 1257 / FGSC 987), this protein is Phosphoenolpyruvate carboxykinase (ATP) (acu-6).